Here is a 182-residue protein sequence, read N- to C-terminus: ATP-dependent protease subunit HslV (182 aa).

Thr10 is an active-site residue. Na(+) is bound by residues Ala166, Cys169, and Ser172.

This sequence belongs to the peptidase T1B family. HslV subfamily. A double ring-shaped homohexamer of HslV is capped on each side by a ring-shaped HslU homohexamer. The assembly of the HslU/HslV complex is dependent on binding of ATP.

It localises to the cytoplasm. The catalysed reaction is ATP-dependent cleavage of peptide bonds with broad specificity.. With respect to regulation, allosterically activated by HslU binding. Protease subunit of a proteasome-like degradation complex believed to be a general protein degrading machinery. This Rickettsia bellii (strain OSU 85-389) protein is ATP-dependent protease subunit HslV.